The chain runs to 464 residues: Protein phosphatase 2C homolog 2 (464 aa).

The region spanning 23 to 292 (AFGLCAMQGW…DNMSIVVVAL (270 aa)) is the PPM-type phosphatase domain. Mn(2+) contacts are provided by D62, G63, D234, and D283. Positions 174-355 (DGFVEMDRVN…KPQDKFTRDH (182 aa)) are interaction with IRE1. Disordered stretches follow at residues 361-398 (SVTA…TSGP) and 434-464 (QLLQ…SHLQ). Positions 366 to 384 (DNDDPMDIDDTDADTDAEN) are enriched in acidic residues. Phosphothreonine is present on residues T376 and T380. A compositionally biased stretch (polar residues) spans 386 to 396 (DPSSQSKSKTS). Residues 448–458 (PENDSNTDHKA) are compositionally biased toward basic and acidic residues.

This sequence belongs to the PP2C family. As to quaternary structure, interacts with IRE1 (when phosphorylated); the interaction is direct and serves to attenuate the endoplasmic reticulum unfolded protein response. Interacts (when phosphorylated) with RAD53 (via domain FHA 1); the interaction is direct and serves to regulate DNA damage checkpoint signaling. Interacts with the ATG17-ATG29-ATG31 and ATG1-ATG13 supercomplex; to regulate induction of autophagy. The cofactor is Mg(2+). Requires Mn(2+) as cofactor.

Its subcellular location is the nucleus. The protein resides in the cytoplasm. It localises to the cytosol. It catalyses the reaction O-phospho-L-seryl-[protein] + H2O = L-seryl-[protein] + phosphate. The catalysed reaction is O-phospho-L-threonyl-[protein] + H2O = L-threonyl-[protein] + phosphate. Dephosphorylating regulator for many key proteins. Dephosphorylates the cell cycle master regulator CDC28/cyclin-dependent kinase 1; its activity appears redundant with phosphatase PTC3. Dephosphorylates HOG1 at 'Thr-171', to attenuate activation of the stress-activated p38MAPK cascade; its activity appears redundant with phosphatase PTC3. Positively regulates both nonselective macroautophagy as well as the selective cytoplasm-to-vacuole (cvt) autophagy pathway and the genotoxin-induced targeted autophagy (GTA) pathway, possibly by dephosphorylating ATG13 to enable the interaction between the ATG17-ATG29-ATG31 and ATG1-ATG13 complexes; its activity appears redundant with phosphatase PTC3. Dephosphorylates RAD53, to regulate DNA damage checkpoint signaling. Dephosphorylates IRE1, to negatively regulate the endoplasmic reticulum unfolded protein response. In Saccharomyces cerevisiae (strain ATCC 204508 / S288c) (Baker's yeast), this protein is Protein phosphatase 2C homolog 2 (PTC2).